Here is a 500-residue protein sequence, read N- to C-terminus: Lysine--tRNA ligase (500 aa).

Glutamate 411 and glutamate 418 together coordinate Mg(2+).

This sequence belongs to the class-II aminoacyl-tRNA synthetase family. In terms of assembly, homodimer. It depends on Mg(2+) as a cofactor.

The protein resides in the cytoplasm. It carries out the reaction tRNA(Lys) + L-lysine + ATP = L-lysyl-tRNA(Lys) + AMP + diphosphate. The chain is Lysine--tRNA ligase from Azoarcus sp. (strain BH72).